The following is a 204-amino-acid chain: Large ribosomal subunit protein uL4 (204 aa).

A disordered region spans residues 53-73 (AFVSGGGKKPWRQKGRGGARA).

It belongs to the universal ribosomal protein uL4 family. In terms of assembly, part of the 50S ribosomal subunit.

Functionally, one of the primary rRNA binding proteins, this protein initially binds near the 5'-end of the 23S rRNA. It is important during the early stages of 50S assembly. It makes multiple contacts with different domains of the 23S rRNA in the assembled 50S subunit and ribosome. In terms of biological role, forms part of the polypeptide exit tunnel. The protein is Large ribosomal subunit protein uL4 of Campylobacter concisus (strain 13826).